We begin with the raw amino-acid sequence, 313 residues long: MSGIDPKRFGKVAVLFGGESAEREVSLTSGRLVLQGLRDAGVDAHPFDPAERPLSALKDEGFVRAFNALHGGYGENGQIQGALDFYGIRYTGSGVLGSALGLDKFRTKLVWQQTGVPTPPFETVMRDDDYAARATEIVAKLGLPLFVKPASEGSSVAVLKVKTADALPAALAEAATHDKIVIVEKSIEGGGEYTACIAGDLDLPLIKIVPAGEFYDYHAKYVADDTQYLIPCGLPADQEAQLKRLARRAFDVLGCTDWGRADFMLDAAGNAYFLEVNTAPGMTDHSLPPKAARAIGISYSELVVKVLSLTLND.

The ATP-grasp domain maps to 108-308 (KLVWQQTGVP…YSELVVKVLS (201 aa)). 138–193 (VAKLGLPLFVKPASEGSSVAVLKVKTADALPAALAEAATHDKIVIVEKSIEGGGEY) provides a ligand contact to ATP. The Mg(2+) site is built by Asp-262, Glu-275, and Asn-277.

Belongs to the D-alanine--D-alanine ligase family. Mg(2+) is required as a cofactor. It depends on Mn(2+) as a cofactor.

It localises to the cytoplasm. It carries out the reaction 2 D-alanine + ATP = D-alanyl-D-alanine + ADP + phosphate + H(+). It participates in cell wall biogenesis; peptidoglycan biosynthesis. Cell wall formation. This chain is D-alanine--D-alanine ligase, found in Burkholderia multivorans (strain ATCC 17616 / 249).